A 183-amino-acid chain; its full sequence is uncharacterized protein (183 aa).

Residues 54-89 (DAASQSDPLPGGDGLTGGDSKATRRTSPRYYPPSEA) are disordered.

This is an uncharacterized protein from Human cytomegalovirus (strain AD169) (HHV-5).